Reading from the N-terminus, the 92-residue chain is Small ribosomal subunit protein uS19c (92 aa).

It belongs to the universal ribosomal protein uS19 family.

Its subcellular location is the plastid. The protein localises to the chloroplast. Functionally, protein S19 forms a complex with S13 that binds strongly to the 16S ribosomal RNA. The polypeptide is Small ribosomal subunit protein uS19c (Thalassiosira pseudonana (Marine diatom)).